Consider the following 179-residue polypeptide: MSRIGKREIELPAGVSVELASDAVVVKGPKGQLSTPTHPKIAYAVADGKVQVSRTDDTRVARAQHGLRRTLLANLVEGVSKGFTKTLEVIGVGYKVATAGNTVSLAVGFSHPVDFKLPEGIEAKVEGNKLTLSGIDKVLLGETAARIRRVRPPEPFKGKGIKYENEVIRRKAGKSGGKK.

Belongs to the universal ribosomal protein uL6 family. As to quaternary structure, part of the 50S ribosomal subunit.

In terms of biological role, this protein binds to the 23S rRNA, and is important in its secondary structure. It is located near the subunit interface in the base of the L7/L12 stalk, and near the tRNA binding site of the peptidyltransferase center. The protein is Large ribosomal subunit protein uL6 of Solidesulfovibrio magneticus (strain ATCC 700980 / DSM 13731 / RS-1) (Desulfovibrio magneticus).